The following is a 230-amino-acid chain: Thymidylate kinase (230 aa).

ATP is bound at residue 20–27; that stretch reads GGEGAGKS.

It belongs to the thymidylate kinase family.

It carries out the reaction dTMP + ATP = dTDP + ADP. Functionally, phosphorylation of dTMP to form dTDP in both de novo and salvage pathways of dTTP synthesis. The protein is Thymidylate kinase of Rhodopseudomonas palustris (strain ATCC BAA-98 / CGA009).